We begin with the raw amino-acid sequence, 577 residues long: Protein NRT1/ PTR FAMILY 6.2 (577 aa).

12 helical membrane passes run 28–48, 74–94, 96–116, 134–154, 183–203, 214–234, 332–352, 369–389, 409–429, 447–467, 488–508, and 535–555; these read WITA…TMGI, FMGT…SFLG, FKTI…LAVA, IPAT…IALG, FFFN…VTVL, WAYG…LCGT, LLPI…MITF, IPAG…LAVY, LQRI…AALV, ISVF…AFIY, GLFL…VSIV, and WLLV…ALWF.

Belongs to the major facilitator superfamily. Proton-dependent oligopeptide transporter (POT/PTR) (TC 2.A.17) family. Expressed in shoots, leaves, flowers and siliques. Expressed in leaf petiole.

It localises to the membrane. Functionally, low-affinity proton-dependent nitrate transporter. Not involved in dipeptides transport. This is Protein NRT1/ PTR FAMILY 6.2 (NPF6.2) from Arabidopsis thaliana (Mouse-ear cress).